A 413-amino-acid chain; its full sequence is Multifunctional CCA protein (413 aa).

2 residues coordinate ATP: Gly8 and Arg11. 2 residues coordinate CTP: Gly8 and Arg11. Residues Asp21 and Asp23 each coordinate Mg(2+). The ATP site is built by Arg91, Arg137, and Arg140. CTP-binding residues include Arg91, Arg137, and Arg140. The 102-residue stretch at 228–329 (TGIHTLMVLA…IKIFDKADLW (102 aa)) folds into the HD domain.

Belongs to the tRNA nucleotidyltransferase/poly(A) polymerase family. Bacterial CCA-adding enzyme type 1 subfamily. As to quaternary structure, monomer. Can also form homodimers and oligomers. Mg(2+) serves as cofactor. The cofactor is Ni(2+).

It catalyses the reaction a tRNA precursor + 2 CTP + ATP = a tRNA with a 3' CCA end + 3 diphosphate. The catalysed reaction is a tRNA with a 3' CCA end + 2 CTP + ATP = a tRNA with a 3' CCACCA end + 3 diphosphate. Catalyzes the addition and repair of the essential 3'-terminal CCA sequence in tRNAs without using a nucleic acid template. Adds these three nucleotides in the order of C, C, and A to the tRNA nucleotide-73, using CTP and ATP as substrates and producing inorganic pyrophosphate. tRNA 3'-terminal CCA addition is required both for tRNA processing and repair. Also involved in tRNA surveillance by mediating tandem CCA addition to generate a CCACCA at the 3' terminus of unstable tRNAs. While stable tRNAs receive only 3'-terminal CCA, unstable tRNAs are marked with CCACCA and rapidly degraded. This chain is Multifunctional CCA protein, found in Shewanella woodyi (strain ATCC 51908 / MS32).